Consider the following 561-residue polypeptide: Putative transport protein YbjL (561 aa).

5 helical membrane-spanning segments follow: residues 8 to 28 (LLNG…LCLG), 32 to 52 (LGSI…LLGQ), 66 to 86 (FMLF…SIFF), 94 to 114 (MLAL…GKLF), and 158 to 178 (NLSL…IVGA). RCK C-terminal domains lie at 200–288 (RGLD…SFRN) and 292–373 (VFDR…RIGF). 5 consecutive transmembrane segments (helical) span residues 383–403 (LLAF…TFQF), 406–426 (FSFG…LGFL), 447–467 (FGLM…ISNG), 475–495 (MLIA…LFGA), and 540–560 (AIAN…WPGL).

The protein belongs to the AAE transporter (TC 2.A.81) family. YbjL subfamily.

The protein resides in the cell membrane. This Salmonella arizonae (strain ATCC BAA-731 / CDC346-86 / RSK2980) protein is Putative transport protein YbjL.